The primary structure comprises 189 residues: Probable nicotinate-nucleotide adenylyltransferase (189 aa).

Belongs to the NadD family.

It catalyses the reaction nicotinate beta-D-ribonucleotide + ATP + H(+) = deamido-NAD(+) + diphosphate. The protein operates within cofactor biosynthesis; NAD(+) biosynthesis; deamido-NAD(+) from nicotinate D-ribonucleotide: step 1/1. Functionally, catalyzes the reversible adenylation of nicotinate mononucleotide (NaMN) to nicotinic acid adenine dinucleotide (NaAD). The polypeptide is Probable nicotinate-nucleotide adenylyltransferase (Bacillus anthracis (strain CDC 684 / NRRL 3495)).